Here is a 70-residue protein sequence, read N- to C-terminus: Cold shock-like protein CspI (70 aa).

The CSD domain occupies 7–67; that stretch reads GLVKWFNPEK…GPKGPAAVHV (61 aa).

It localises to the cytoplasm. This chain is Cold shock-like protein CspI (cspI), found in Escherichia coli O6:H1 (strain CFT073 / ATCC 700928 / UPEC).